Reading from the N-terminus, the 678-residue chain is Glycine--tRNA ligase beta subunit (678 aa).

Belongs to the class-II aminoacyl-tRNA synthetase family. As to quaternary structure, tetramer of two alpha and two beta subunits.

It is found in the cytoplasm. The enzyme catalyses tRNA(Gly) + glycine + ATP = glycyl-tRNA(Gly) + AMP + diphosphate. In Streptococcus pneumoniae serotype 19F (strain G54), this protein is Glycine--tRNA ligase beta subunit.